A 38-amino-acid polypeptide reads, in one-letter code: Large ribosomal subunit protein bL36 (38 aa).

Belongs to the bacterial ribosomal protein bL36 family.

The protein is Large ribosomal subunit protein bL36 of Gemmatimonas aurantiaca (strain DSM 14586 / JCM 11422 / NBRC 100505 / T-27).